A 232-amino-acid polypeptide reads, in one-letter code: Enolase-phosphatase E1 (232 aa).

It belongs to the HAD-like hydrolase superfamily. MasA/MtnC family. As to quaternary structure, monomer. It depends on Mg(2+) as a cofactor.

It catalyses the reaction 5-methylsulfanyl-2,3-dioxopentyl phosphate + H2O = 1,2-dihydroxy-5-(methylsulfanyl)pent-1-en-3-one + phosphate. It functions in the pathway amino-acid biosynthesis; L-methionine biosynthesis via salvage pathway; L-methionine from S-methyl-5-thio-alpha-D-ribose 1-phosphate: step 3/6. It participates in amino-acid biosynthesis; L-methionine biosynthesis via salvage pathway; L-methionine from S-methyl-5-thio-alpha-D-ribose 1-phosphate: step 4/6. Functionally, bifunctional enzyme that catalyzes the enolization of 2,3-diketo-5-methylthiopentyl-1-phosphate (DK-MTP-1-P) into the intermediate 2-hydroxy-3-keto-5-methylthiopentenyl-1-phosphate (HK-MTPenyl-1-P), which is then dephosphorylated to form the acireductone 1,2-dihydroxy-3-keto-5-methylthiopentene (DHK-MTPene). In Acidiphilium cryptum (strain JF-5), this protein is Enolase-phosphatase E1.